We begin with the raw amino-acid sequence, 325 residues long: Tagatose 1,6-diphosphate aldolase 1 (325 aa).

Belongs to the aldolase LacD family.

The enzyme catalyses D-tagatofuranose 1,6-bisphosphate = D-glyceraldehyde 3-phosphate + dihydroxyacetone phosphate. The protein operates within carbohydrate metabolism; D-tagatose 6-phosphate degradation; D-glyceraldehyde 3-phosphate and glycerone phosphate from D-tagatose 6-phosphate: step 2/2. This is Tagatose 1,6-diphosphate aldolase 1 (lacD1) from Streptococcus pyogenes serotype M3 (strain SSI-1).